Consider the following 448-residue polypeptide: N-succinylarginine dihydrolase (448 aa).

Substrate contacts are provided by residues 19–28, Asn-110, and 137–138; these read GGLSYGNVAS and HR. The active site involves Glu-174. Residue Arg-214 participates in substrate binding. His-250 is a catalytic residue. Substrate contacts are provided by Asp-252 and Asn-365. Cys-371 acts as the Nucleophile in catalysis.

The protein belongs to the succinylarginine dihydrolase family. Homodimer.

It carries out the reaction N(2)-succinyl-L-arginine + 2 H2O + 2 H(+) = N(2)-succinyl-L-ornithine + 2 NH4(+) + CO2. It functions in the pathway amino-acid degradation; L-arginine degradation via AST pathway; L-glutamate and succinate from L-arginine: step 2/5. In terms of biological role, catalyzes the hydrolysis of N(2)-succinylarginine into N(2)-succinylornithine, ammonia and CO(2). The protein is N-succinylarginine dihydrolase of Pseudomonas paraeruginosa (strain DSM 24068 / PA7) (Pseudomonas aeruginosa (strain PA7)).